The following is a 588-amino-acid chain: Solute carrier family 2, facilitated glucose transporter member 12 (588 aa).

The Cytoplasmic portion of the chain corresponds to methionine 1–threonine 28. Residues glycine 29 to glycine 49 form a helical membrane-spanning segment. Over tyrosine 50–glutamate 74 the chain is Extracellular. Residues isoleucine 75–isoleucine 95 form a helical membrane-spanning segment. The Cytoplasmic segment spans residues aspartate 96 to threonine 103. The helical transmembrane segment at isoleucine 104–tyrosine 124 threads the bilayer. Residues glycine 125 to arginine 131 lie on the Extracellular side of the membrane. A helical transmembrane segment spans residues isoleucine 132–leucine 152. The Cytoplasmic portion of the chain corresponds to serine 153–arginine 158. Residues glycine 159 to cysteine 179 form a helical membrane-spanning segment. The Extracellular segment spans residues asparagine 180–lysine 191. A helical transmembrane segment spans residues tyrosine 192 to proline 212. Over arginine 213 to arginine 272 the chain is Cytoplasmic. A helical transmembrane segment spans residues leucine 273 to phenylalanine 293. The Extracellular portion of the chain corresponds to tyrosine 294–serine 311. The chain crosses the membrane as a helical span at residues leucine 312–valine 332. The Cytoplasmic portion of the chain corresponds to aspartate 333–threonine 339. A helical membrane pass occupies residues phenylalanine 340–leucine 360. Topologically, residues glutamine 361 to leucine 459 are extracellular. N-linked (GlcNAc...) asparagine glycosylation is found at asparagine 377, asparagine 395, and asparagine 419. A helical transmembrane segment spans residues serine 460–valine 480. Topologically, residues glutamine 481–arginine 492 are cytoplasmic. Residues alanine 493–leucine 513 traverse the membrane as a helical segment. Residues threonine 514 to proline 522 are Extracellular-facing. Residues tryptophan 523–valine 543 form a helical membrane-spanning segment. The Cytoplasmic portion of the chain corresponds to proline 544–alanine 588.

It belongs to the major facilitator superfamily. Sugar transporter (TC 2.A.1.1) family. Glucose transporter subfamily.

The protein resides in the cell membrane. It is found in the endomembrane system. Its subcellular location is the cytoplasm. It localises to the perinuclear region. It catalyses the reaction D-glucose(out) = D-glucose(in). Insulin-regulated facilitative glucose transporter. In Xenopus laevis (African clawed frog), this protein is Solute carrier family 2, facilitated glucose transporter member 12.